The primary structure comprises 55 residues: Large ribosomal subunit protein bL33 (55 aa).

Belongs to the bacterial ribosomal protein bL33 family.

The sequence is that of Large ribosomal subunit protein bL33 from Caulobacter vibrioides (strain ATCC 19089 / CIP 103742 / CB 15) (Caulobacter crescentus).